A 126-amino-acid polypeptide reads, in one-letter code: Apolipoprotein C-IV (126 aa).

The N-terminal stretch at 1 to 27 is a signal peptide; sequence MSLLRHRLQALPSLCLCVLVLACIGAC.

This sequence belongs to the apolipoprotein C4 family.

The protein resides in the secreted. Its function is as follows. May participate in lipoprotein metabolism. The polypeptide is Apolipoprotein C-IV (APOC4) (Aotus nancymaae (Ma's night monkey)).